Consider the following 239-residue polypeptide: RNA polymerase sigma-35 factor (239 aa).

Residues 1-27 constitute a propeptide that is removed on maturation; sequence MMKLKFYLVYLWYKVLLKLGIKTDEIY. Positions 86 to 99 match the Polymerase core binding motif; the sequence is DLISIGTIGLIKAV. Residues 206–225 constitute a DNA-binding region (H-T-H motif); it reads QKDVADMLGISQSYISRLEK.

It belongs to the sigma-70 factor family. Proteolytically cleaved in the N-terminus probably by a SpoIIGA homolog to yield the active peptide.

Sigma factors are initiation factors that promote the attachment of RNA polymerase to specific initiation sites and are then released. This sigma factor directs the transcription of crystal protein genes, a sporulation-regulated event. In Bacillus anthracis, this protein is RNA polymerase sigma-35 factor (sigE).